Here is a 410-residue protein sequence, read N- to C-terminus: tRNA-guanine(15) transglycosylase (410 aa).

The Nucleophile role is filled by Asp-87. 2 residues coordinate substrate: Asp-122 and Gly-187.

The protein belongs to the archaeosine tRNA-ribosyltransferase family. Zn(2+) is required as a cofactor.

The enzyme catalyses guanosine(15) in tRNA + 7-cyano-7-deazaguanine = 7-cyano-7-carbaguanosine(15) in tRNA + guanine. Its pathway is tRNA modification; archaeosine-tRNA biosynthesis. Functionally, exchanges the guanine residue with 7-cyano-7-deazaguanine (preQ0) at position 15 in the dihydrouridine loop (D-loop) of archaeal tRNAs. The protein is tRNA-guanine(15) transglycosylase of Nanoarchaeum equitans (strain Kin4-M).